The primary structure comprises 559 residues: Formate--tetrahydrofolate ligase (559 aa).

Residue 67 to 74 (TPAGEGKS) coordinates ATP.

This sequence belongs to the formate--tetrahydrofolate ligase family.

It carries out the reaction (6S)-5,6,7,8-tetrahydrofolate + formate + ATP = (6R)-10-formyltetrahydrofolate + ADP + phosphate. It functions in the pathway one-carbon metabolism; tetrahydrofolate interconversion. This Lactobacillus delbrueckii subsp. bulgaricus (strain ATCC BAA-365 / Lb-18) protein is Formate--tetrahydrofolate ligase.